Reading from the N-terminus, the 197-residue chain is MSSKEQKTPEGQAPEEIIMDQHEEIEAVEPEASAEQVDPRDEKIANLEAQLAEAQTRERDGILRVKAEMENLRRRTELDIEKAHKFALEKFINELLPVIDSLDRALEVADKANPDMSAMVEGIELTLKSMLDVVRKFGVEVIAETNVPLDPNVHQAIAMVESDDVAPGNVLGIMQKGYTLNGRTIRAAMVTVAKAKD.

The tract at residues 1-39 is disordered; sequence MSSKEQKTPEGQAPEEIIMDQHEEIEAVEPEASAEQVDP.

It belongs to the GrpE family. As to quaternary structure, homodimer.

Its subcellular location is the cytoplasm. In terms of biological role, participates actively in the response to hyperosmotic and heat shock by preventing the aggregation of stress-denatured proteins, in association with DnaK and GrpE. It is the nucleotide exchange factor for DnaK and may function as a thermosensor. Unfolded proteins bind initially to DnaJ; upon interaction with the DnaJ-bound protein, DnaK hydrolyzes its bound ATP, resulting in the formation of a stable complex. GrpE releases ADP from DnaK; ATP binding to DnaK triggers the release of the substrate protein, thus completing the reaction cycle. Several rounds of ATP-dependent interactions between DnaJ, DnaK and GrpE are required for fully efficient folding. The polypeptide is Protein GrpE (Escherichia coli O45:K1 (strain S88 / ExPEC)).